We begin with the raw amino-acid sequence, 435 residues long: 3-phosphoshikimate 1-carboxyvinyltransferase (435 aa).

Lysine 28, serine 29, and arginine 33 together coordinate 3-phosphoshikimate. Phosphoenolpyruvate is bound at residue lysine 28. Residues glycine 100 and arginine 128 each contribute to the phosphoenolpyruvate site. 3-phosphoshikimate-binding residues include serine 173, glutamine 175, aspartate 321, and lysine 348. Glutamine 175 is a binding site for phosphoenolpyruvate. The Proton acceptor role is filled by aspartate 321. Phosphoenolpyruvate-binding residues include arginine 352 and arginine 394.

The protein belongs to the EPSP synthase family. Monomer.

The protein localises to the cytoplasm. It carries out the reaction 3-phosphoshikimate + phosphoenolpyruvate = 5-O-(1-carboxyvinyl)-3-phosphoshikimate + phosphate. The protein operates within metabolic intermediate biosynthesis; chorismate biosynthesis; chorismate from D-erythrose 4-phosphate and phosphoenolpyruvate: step 6/7. Catalyzes the transfer of the enolpyruvyl moiety of phosphoenolpyruvate (PEP) to the 5-hydroxyl of shikimate-3-phosphate (S3P) to produce enolpyruvyl shikimate-3-phosphate and inorganic phosphate. This chain is 3-phosphoshikimate 1-carboxyvinyltransferase, found in Desulfitobacterium hafniense (strain DSM 10664 / DCB-2).